Consider the following 467-residue polypeptide: UDP-N-acetylmuramate--L-alanine ligase (467 aa).

114 to 120 contributes to the ATP binding site; sequence GTHGKTT.

It belongs to the MurCDEF family.

The protein localises to the cytoplasm. It catalyses the reaction UDP-N-acetyl-alpha-D-muramate + L-alanine + ATP = UDP-N-acetyl-alpha-D-muramoyl-L-alanine + ADP + phosphate + H(+). It functions in the pathway cell wall biogenesis; peptidoglycan biosynthesis. Functionally, cell wall formation. The polypeptide is UDP-N-acetylmuramate--L-alanine ligase (Bradyrhizobium diazoefficiens (strain JCM 10833 / BCRC 13528 / IAM 13628 / NBRC 14792 / USDA 110)).